Reading from the N-terminus, the 198-residue chain is Holliday junction branch migration complex subunit RuvA (198 aa).

The domain I stretch occupies residues Met1–His63. Positions Thr64–Lys142 are domain II. A flexible linker region spans residues Ala143 to Lys147. The domain III stretch occupies residues Ala148–Gly198.

It belongs to the RuvA family. As to quaternary structure, homotetramer. Forms an RuvA(8)-RuvB(12)-Holliday junction (HJ) complex. HJ DNA is sandwiched between 2 RuvA tetramers; dsDNA enters through RuvA and exits via RuvB. An RuvB hexamer assembles on each DNA strand where it exits the tetramer. Each RuvB hexamer is contacted by two RuvA subunits (via domain III) on 2 adjacent RuvB subunits; this complex drives branch migration. In the full resolvosome a probable DNA-RuvA(4)-RuvB(12)-RuvC(2) complex forms which resolves the HJ.

It localises to the cytoplasm. Its function is as follows. The RuvA-RuvB-RuvC complex processes Holliday junction (HJ) DNA during genetic recombination and DNA repair, while the RuvA-RuvB complex plays an important role in the rescue of blocked DNA replication forks via replication fork reversal (RFR). RuvA specifically binds to HJ cruciform DNA, conferring on it an open structure. The RuvB hexamer acts as an ATP-dependent pump, pulling dsDNA into and through the RuvAB complex. HJ branch migration allows RuvC to scan DNA until it finds its consensus sequence, where it cleaves and resolves the cruciform DNA. In Streptococcus pyogenes serotype M2 (strain MGAS10270), this protein is Holliday junction branch migration complex subunit RuvA.